Reading from the N-terminus, the 376-residue chain is Anhydro-N-acetylmuramic acid kinase (376 aa).

11–18 (GTSMDGVD) is a binding site for ATP.

The protein belongs to the anhydro-N-acetylmuramic acid kinase family.

The catalysed reaction is 1,6-anhydro-N-acetyl-beta-muramate + ATP + H2O = N-acetyl-D-muramate 6-phosphate + ADP + H(+). Its pathway is amino-sugar metabolism; 1,6-anhydro-N-acetylmuramate degradation. It functions in the pathway cell wall biogenesis; peptidoglycan recycling. Its function is as follows. Catalyzes the specific phosphorylation of 1,6-anhydro-N-acetylmuramic acid (anhMurNAc) with the simultaneous cleavage of the 1,6-anhydro ring, generating MurNAc-6-P. Is required for the utilization of anhMurNAc either imported from the medium or derived from its own cell wall murein, and thus plays a role in cell wall recycling. This chain is Anhydro-N-acetylmuramic acid kinase, found in Acinetobacter baylyi (strain ATCC 33305 / BD413 / ADP1).